Here is a 281-residue protein sequence, read N- to C-terminus: Pantothenate synthetase (281 aa).

26–33 provides a ligand contact to ATP; that stretch reads MGSLHEGH. Catalysis depends on His-33, which acts as the Proton donor. Gln-57 contacts (R)-pantoate. Residue Gln-57 coordinates beta-alanine. 144-147 is a binding site for ATP; the sequence is GKKD. Gln-150 contributes to the (R)-pantoate binding site. Residues Ala-173 and 181–184 contribute to the ATP site; that span reads LSSR.

This sequence belongs to the pantothenate synthetase family. As to quaternary structure, homodimer.

It is found in the cytoplasm. It carries out the reaction (R)-pantoate + beta-alanine + ATP = (R)-pantothenate + AMP + diphosphate + H(+). Its pathway is cofactor biosynthesis; (R)-pantothenate biosynthesis; (R)-pantothenate from (R)-pantoate and beta-alanine: step 1/1. Its function is as follows. Catalyzes the condensation of pantoate with beta-alanine in an ATP-dependent reaction via a pantoyl-adenylate intermediate. In Methylibium petroleiphilum (strain ATCC BAA-1232 / LMG 22953 / PM1), this protein is Pantothenate synthetase.